We begin with the raw amino-acid sequence, 472 residues long: Glutamyl-tRNA(Gln) amidotransferase subunit A (472 aa).

Residues Lys-69 and Ser-144 each act as charge relay system in the active site. The active-site Acyl-ester intermediate is the Ser-168.

Belongs to the amidase family. GatA subfamily. In terms of assembly, heterotrimer of A, B and C subunits.

It carries out the reaction L-glutamyl-tRNA(Gln) + L-glutamine + ATP + H2O = L-glutaminyl-tRNA(Gln) + L-glutamate + ADP + phosphate + H(+). Its function is as follows. Allows the formation of correctly charged Gln-tRNA(Gln) through the transamidation of misacylated Glu-tRNA(Gln) in organisms which lack glutaminyl-tRNA synthetase. The reaction takes place in the presence of glutamine and ATP through an activated gamma-phospho-Glu-tRNA(Gln). The chain is Glutamyl-tRNA(Gln) amidotransferase subunit A from Sulfurisphaera tokodaii (strain DSM 16993 / JCM 10545 / NBRC 100140 / 7) (Sulfolobus tokodaii).